A 734-amino-acid chain; its full sequence is Photosystem I P700 chlorophyll a apoprotein A2 (734 aa).

8 helical membrane-spanning segments follow: residues 46–69 (IFAS…FHVA), 135–158 (LYTG…LHLQ), 175–199 (LNHH…HVAI), 273–291 (MAHH…GHMY), 330–353 (IHFQ…QHMY), 369–395 (AALY…IFFI), 417–439 (AIIS…LYVH), and 517–535 (FLVH…LILV). [4Fe-4S] cluster is bound by residues Cys-559 and Cys-568. Transmembrane regions (helical) follow at residues 575–596 (AFYL…YWHW) and 643–665 (LSVW…MFLI). His-654, Met-662, and Tyr-670 together coordinate chlorophyll a. A phylloquinone-binding site is contributed by Trp-671. A helical transmembrane segment spans residues 707 to 727 (LVGLAHFSVGYIFTYAAFLIA).

The protein belongs to the PsaA/PsaB family. As to quaternary structure, the PsaA/B heterodimer binds the P700 chlorophyll special pair and subsequent electron acceptors. PSI consists of a core antenna complex that captures photons, and an electron transfer chain that converts photonic excitation into a charge separation. The eukaryotic PSI reaction center is composed of at least 11 subunits. The cofactor is P700 is a chlorophyll a/chlorophyll a' dimer, A0 is one or more chlorophyll a, A1 is one or both phylloquinones and FX is a shared 4Fe-4S iron-sulfur center..

The protein resides in the plastid. It localises to the chloroplast thylakoid membrane. It carries out the reaction reduced [plastocyanin] + hnu + oxidized [2Fe-2S]-[ferredoxin] = oxidized [plastocyanin] + reduced [2Fe-2S]-[ferredoxin]. PsaA and PsaB bind P700, the primary electron donor of photosystem I (PSI), as well as the electron acceptors A0, A1 and FX. PSI is a plastocyanin-ferredoxin oxidoreductase, converting photonic excitation into a charge separation, which transfers an electron from the donor P700 chlorophyll pair to the spectroscopically characterized acceptors A0, A1, FX, FA and FB in turn. Oxidized P700 is reduced on the lumenal side of the thylakoid membrane by plastocyanin. The polypeptide is Photosystem I P700 chlorophyll a apoprotein A2 (Draba nemorosa (Woodland whitlowgrass)).